Here is a 135-residue protein sequence, read N- to C-terminus: NADPH-dependent 7-cyano-7-deazaguanine reductase (135 aa).

C48 serves as the catalytic Thioimide intermediate. The active-site Proton donor is D55. Substrate is bound by residues 70 to 72 (LEL) and 89 to 90 (HE).

The protein belongs to the GTP cyclohydrolase I family. QueF type 1 subfamily.

Its subcellular location is the cytoplasm. The enzyme catalyses 7-aminomethyl-7-carbaguanine + 2 NADP(+) = 7-cyano-7-deazaguanine + 2 NADPH + 3 H(+). It functions in the pathway tRNA modification; tRNA-queuosine biosynthesis. Functionally, catalyzes the NADPH-dependent reduction of 7-cyano-7-deazaguanine (preQ0) to 7-aminomethyl-7-deazaguanine (preQ1). This is NADPH-dependent 7-cyano-7-deazaguanine reductase from Prochlorococcus marinus (strain SARG / CCMP1375 / SS120).